The following is a 264-amino-acid chain: Agamous-like MADS-box protein AGL61 (264 aa).

The MADS-box domain occupies 62-122 (IGRQKIPMVK…KKPFSFGHPS (61 aa)).

In terms of assembly, interacts with PHE1/AGL37, PHE2/AGL38, AGL80 and AGL86. Forms a heterodimer with AGL80. As to expression, expressed exclusively in the central cell of the female gametophyte and in early endosperm.

Its subcellular location is the nucleus. In terms of biological role, probable transcription factor. Controls central cell differentiation during female gametophyte development. The chain is Agamous-like MADS-box protein AGL61 (AGL61) from Arabidopsis thaliana (Mouse-ear cress).